Here is a 207-residue protein sequence, read N- to C-terminus: Guanylate kinase (207 aa).

The 180-residue stretch at 5–184 (GNLFIVSAPS…ALADLKSIIF (180 aa)) folds into the Guanylate kinase-like domain. 12–19 (APSGAGKS) provides a ligand contact to ATP.

Belongs to the guanylate kinase family.

Its subcellular location is the cytoplasm. It catalyses the reaction GMP + ATP = GDP + ADP. In terms of biological role, essential for recycling GMP and indirectly, cGMP. This Shewanella denitrificans (strain OS217 / ATCC BAA-1090 / DSM 15013) protein is Guanylate kinase.